Here is a 342-residue protein sequence, read N- to C-terminus: Anthranilate phosphoribosyltransferase (342 aa).

5-phospho-alpha-D-ribose 1-diphosphate contacts are provided by residues glycine 79, 82-83, threonine 87, 89-92, 107-115, and serine 119; these read GD, NIST, and KHCNQRISS. Anthranilate is bound at residue glycine 79. Mg(2+) is bound at residue serine 91. Residue asparagine 110 coordinates anthranilate. Arginine 165 serves as a coordination point for anthranilate. Positions 223 and 224 each coordinate Mg(2+).

This sequence belongs to the anthranilate phosphoribosyltransferase family. In terms of assembly, homodimer. Mg(2+) is required as a cofactor.

It catalyses the reaction N-(5-phospho-beta-D-ribosyl)anthranilate + diphosphate = 5-phospho-alpha-D-ribose 1-diphosphate + anthranilate. Its pathway is amino-acid biosynthesis; L-tryptophan biosynthesis; L-tryptophan from chorismate: step 2/5. Catalyzes the transfer of the phosphoribosyl group of 5-phosphorylribose-1-pyrophosphate (PRPP) to anthranilate to yield N-(5'-phosphoribosyl)-anthranilate (PRA). The protein is Anthranilate phosphoribosyltransferase of Buchnera aphidicola subsp. Acyrthosiphon pisum (strain Tuc7).